Here is a 275-residue protein sequence, read N- to C-terminus: Light-independent protochlorophyllide reductase iron-sulfur ATP-binding protein (275 aa).

Residues Gly10–Thr15 and Lys39 each bind ATP. Position 14 (Ser14) interacts with Mg(2+). Residues Cys95 and Cys129 each contribute to the [4Fe-4S] cluster site. Asn180–Arg181 is a binding site for ATP.

This sequence belongs to the NifH/BchL/ChlL family. As to quaternary structure, homodimer. Protochlorophyllide reductase is composed of three subunits; ChlL, ChlN and ChlB. [4Fe-4S] cluster serves as cofactor.

It catalyses the reaction chlorophyllide a + oxidized 2[4Fe-4S]-[ferredoxin] + 2 ADP + 2 phosphate = protochlorophyllide a + reduced 2[4Fe-4S]-[ferredoxin] + 2 ATP + 2 H2O. The protein operates within porphyrin-containing compound metabolism; chlorophyll biosynthesis (light-independent). In terms of biological role, component of the dark-operative protochlorophyllide reductase (DPOR) that uses Mg-ATP and reduced ferredoxin to reduce ring D of protochlorophyllide (Pchlide) to form chlorophyllide a (Chlide). This reaction is light-independent. The L component serves as a unique electron donor to the NB-component of the complex, and binds Mg-ATP. The polypeptide is Light-independent protochlorophyllide reductase iron-sulfur ATP-binding protein (Gloeobacter violaceus (strain ATCC 29082 / PCC 7421)).